Here is a 226-residue protein sequence, read N- to C-terminus: MDMQQETIERIIRQVLGQVGPAGGSIATLSGDAGVDPFQVAVGVSNRHIHLSRTDMDTLFGPGAELQRKKAMKQPGQFAAEETVTLKGPKGSLSKVRVLGPLRRETQVEVSVADGFALGITPPLRQSGQLDDTPGLTIIGPQGSVTKDHGVIVAQRHIHMHPSTAAKLGLRNGDEVDVEAGGERGGVMHRVLIRVAEASADEMHIDVEEANALCLKNDDVVRICKK.

CoA is bound at residue 44–46 (VSN). Residues histidine 48 and histidine 50 each coordinate Zn(2+). Residues methionine 72, lysine 90, and arginine 97 each contribute to the CoA site. Arginine 103 provides a ligand contact to phosphate. Glutamate 109 is a binding site for Zn(2+). CoA is bound at residue phenylalanine 116. The Zn(2+) site is built by histidine 157, histidine 159, and histidine 204. Asparagine 211 is a CoA binding site.

Belongs to the PduL family. In terms of assembly, full-length protein forms large oligomers. Homodimer, when purified in the absence of the encapsulation peptide (EP, residues 1-47). The EP may influence oligomerization. The cofactor is Zn(2+).

Its subcellular location is the bacterial microcompartment. The catalysed reaction is propanoyl-CoA + phosphate = propanoyl phosphate + CoA. It participates in polyol metabolism; 1,2-propanediol degradation. In terms of biological role, involved in 1,2-propanediol (1,2-PD) utilization within the bacterial microcompartment (BMC) dedicated to 1,2-PD degradation by catalyzing the conversion of propanoyl-CoA to propanoyl-phosphate. CoA is regenerated within the pdu BMC (for use by PduP) via this enzyme, although there must also be cofactor transport across the BMC. Directly targeted to the BMC. Phosphate is probably the first substrate to bind in the forward direction. CoA is probably the first substrate to bind in the reverse direction, and might bind to the enzyme as the BMC assembles, ensuring cofactor encapsulation. The protein is Phosphate propanoyltransferase of Rhodopseudomonas palustris (strain BisB18).